The following is a 125-amino-acid chain: Probable endoribonuclease HigB1 (125 aa).

It belongs to the mycobacterial HigB family.

In terms of biological role, toxic component of an atypical, type II toxin-antitoxin chaperone (TAC) system. Probably an endoribonuclease, neutralized by its cognate antitoxin HigA which also requires SecB-like chaperone MT2006 (AC Q7D7P7). This is Probable endoribonuclease HigB1 from Mycobacterium tuberculosis (strain CDC 1551 / Oshkosh).